The chain runs to 598 residues: Protein unc-93 homolog B1 (598 aa).

The interval 1-36 is disordered; it reads MEVEPPLYPVAGAAGPQGDEDRHGVPDGPEAPLDEL. The next 5 helical transmembrane spans lie at 64-84, 110-130, 132-152, 160-180, and 223-243; these read VLAA…LLQM, KMLM…PVLI, FFGT…FVST, TLVP…ASMG, and IFYS…IYFL. Asn251 and Asn272 each carry an N-linked (GlcNAc...) asparagine glycan. The next 5 membrane-spanning stretches (helical) occupy residues 285 to 305, 343 to 363, 378 to 398, 403 to 423, and 428 to 448; these read LIVV…MVLG, LVPF…GFAL, LLIA…LGLW, VPLV…FFWA, and VLQH…GSAL. Asn449 is a glycosylation site (N-linked (GlcNAc...) asparagine). Transmembrane regions (helical) follow at residues 469–489 and 495–515; these read FIFT…YLGS and AKLA…LWME. The tract at residues 524 to 598 is disordered; sequence PRQPRIPKPQ…ALGGDGPEEQ (75 aa). A compositionally biased stretch (acidic residues) spans 544–554; it reads EDNSDESDMEG. Ser547 and Ser550 each carry phosphoserine.

The protein belongs to the unc-93 family. Interacts with TLR3, TLR5, TLR7, TLR8, TLR9 and TLR13 (probably via transmembrane domain). Post-translationally, N-glycosylated.

Its subcellular location is the endoplasmic reticulum membrane. The protein resides in the endosome. The protein localises to the lysosome. It localises to the cytoplasmic vesicle. It is found in the phagosome. Functionally, plays an important role in innate and adaptive immunity by regulating nucleotide-sensing Toll-like receptor (TLR) signaling. Required for the transport of a subset of TLRs (including TLR3, TLR7 and TLR9) from the endoplasmic reticulum to endolysosomes where they can engage pathogen nucleotides and activate signaling cascades. May play a role in autoreactive B-cells removal. In Mus musculus (Mouse), this protein is Protein unc-93 homolog B1.